The sequence spans 498 residues: Lycopene beta cyclase, chloroplastic/chromoplastic (498 aa).

The transit peptide at 1–79 (MDTLLRTPNN…ELPMYDPSKG (79 aa)) directs the protein to the chloroplast and chromoplast. 84–112 (LAVVGGGPAGLAVAQQVSEAGLSVCSIDP) provides a ligand contact to NAD(+). Residues 293–297 (FLEET) carry the FLEET motif motif.

It belongs to the lycopene cyclase family. In terms of assembly, monomer. FAD serves as cofactor. Requires NADPH as cofactor.

The protein resides in the plastid. Its subcellular location is the chloroplast. It is found in the chromoplast. The catalysed reaction is a carotenoid psi-end group = a carotenoid beta-end derivative. It catalyses the reaction all-trans-lycopene = gamma-carotene. It carries out the reaction gamma-carotene = all-trans-beta-carotene. The enzyme catalyses all-trans-neurosporene = beta-zeacarotene. The catalysed reaction is beta-zeacarotene = 7,8-dihydro-beta-carotene. It participates in carotenoid biosynthesis; beta-carotene biosynthesis. The protein operates within carotenoid biosynthesis; beta-zeacarotene biosynthesis. Catalyzes the double cyclization reaction which converts lycopene to beta-carotene. Catalyzes the double cyclization reaction which converts neurosporene to 7,8-dihydro-beta-carotene. This Capsicum annuum (Capsicum pepper) protein is Lycopene beta cyclase, chloroplastic/chromoplastic.